The following is a 562-amino-acid chain: Phosphoglucomutase-1 (562 aa).

Methionine 1 bears the N-acetylmethionine mark. N6-acetyllysine is present on lysine 16. Alpha-D-glucose 1,6-bisphosphate is bound at residue arginine 23. Threonine 115 bears the Phosphothreonine mark. Serine 117 provides a ligand contact to alpha-D-glucose 1,6-bisphosphate. Serine 117 serves as the catalytic Phosphoserine intermediate. Position 117 (serine 117) interacts with Mg(2+). A phosphoserine mark is found at serine 117 and serine 134. Threonine 185 carries the post-translational modification Phosphothreonine. Serine 213 carries the phosphoserine modification. 3 residues coordinate Mg(2+): aspartate 288, aspartate 290, and aspartate 292. Alpha-D-glucose 1,6-bisphosphate-binding residues include aspartate 292 and arginine 293. N6-acetyllysine is present on lysine 349. Position 353 is a phosphotyrosine (tyrosine 353). Residue threonine 357 coordinates alpha-D-glucose 1,6-bisphosphate. Serine 369 is subject to Phosphoserine. Positions 376, 378, and 389 each coordinate alpha-D-glucose 1,6-bisphosphate. Serine 378 is subject to Phosphoserine. N6-succinyllysine is present on lysine 419. Position 467 is a phosphothreonine; by PAK1 (threonine 467). A phosphoserine mark is found at serine 485 and serine 505. Threonine 507 carries the phosphothreonine modification. Phosphoserine is present on residues serine 509 and serine 541.

The protein belongs to the phosphohexose mutase family. As to quaternary structure, monomer. Mg(2+) serves as cofactor. Post-translationally, isoform 2 is the major calmodulin-dependent phosphoprotein in junctional skeletal sarcoplasmic reticulum vesicles. Phosphorylation at Thr-467 by PAK1 significantly enhances enzymatic activity.

The protein resides in the cytoplasm. It localises to the sarcoplasmic reticulum. It carries out the reaction alpha-D-glucose 1-phosphate = alpha-D-glucose 6-phosphate. It catalyses the reaction O-phospho-L-seryl-[protein] + alpha-D-glucose 1-phosphate = alpha-D-glucose 1,6-bisphosphate + L-seryl-[protein]. The enzyme catalyses alpha-D-glucose 1,6-bisphosphate + L-seryl-[protein] = O-phospho-L-seryl-[protein] + alpha-D-glucose 6-phosphate. Glucose-1,6-bisphosphate enhances phosphorylation of the active site Ser-117, and thereby increases enzyme activity. Its function is as follows. Catalyzes the reversible isomerization of alpha-D-glucose 1-phosphate to alpha-D-glucose 6-phosphate. The mechanism proceeds via the intermediate compound alpha-D-glucose 1,6-bisphosphate. This enzyme participates in both the breakdown and synthesis of glucose. This Oryctolagus cuniculus (Rabbit) protein is Phosphoglucomutase-1 (PGM1).